Here is a 607-residue protein sequence, read N- to C-terminus: Sulfite reductase [NADPH] flavoprotein alpha-component (607 aa).

In terms of domain architecture, Flavodoxin-like spans 66–204 (VTILYGSQTG…AAGQWHADVL (139 aa)). FMN contacts are provided by residues 72-77 (SQTGNG), 119-122 (STHG), and 155-164 (LGDSSYEFFC). The 218-residue stretch at 239–456 (QNPYRAEVLV…VEPNKHFRLP (218 aa)) folds into the FAD-binding FR-type domain. FAD contacts are provided by residues Thr327, Leu361, 395–398 (RLYS), 413–415 (TVA), and 428–431 (GGAS). NADP(+) is bound by residues 527–528 (SR), 533–537 (KIYVQ), and Asp569. Residue Tyr607 coordinates FAD.

Belongs to the NADPH-dependent sulphite reductase flavoprotein subunit CysJ family. It in the N-terminal section; belongs to the flavodoxin family. This sequence in the C-terminal section; belongs to the flavoprotein pyridine nucleotide cytochrome reductase family. As to quaternary structure, alpha(8)-beta(8). The alpha component is a flavoprotein, the beta component is a hemoprotein. The cofactor is FAD. Requires FMN as cofactor.

It carries out the reaction hydrogen sulfide + 3 NADP(+) + 3 H2O = sulfite + 3 NADPH + 4 H(+). Its pathway is sulfur metabolism; hydrogen sulfide biosynthesis; hydrogen sulfide from sulfite (NADPH route): step 1/1. Component of the sulfite reductase complex that catalyzes the 6-electron reduction of sulfite to sulfide. This is one of several activities required for the biosynthesis of L-cysteine from sulfate. The flavoprotein component catalyzes the electron flow from NADPH -&gt; FAD -&gt; FMN to the hemoprotein component. The polypeptide is Sulfite reductase [NADPH] flavoprotein alpha-component (Shewanella oneidensis (strain ATCC 700550 / JCM 31522 / CIP 106686 / LMG 19005 / NCIMB 14063 / MR-1)).